A 480-amino-acid polypeptide reads, in one-letter code: Thiamine biosynthesis bifunctional protein ThiM/ThiE (480 aa).

The interval 1–287 is hydroxyethylthiazole kinase; it reads MSTLPERVRE…LYVLVSGATP (287 aa). M40 is a binding site for 5-(2-hydroxyethyl)-4-methylthiazole. Residues R116 and T164 each contribute to the ATP site. 5-(2-hydroxyethyl)-4-methylthiazole is bound at residue G191. The segment at 288-480 is thiamine-phosphate synthase; sequence PDVLEAVLQA…VRRAKGEVSA (193 aa). 4-amino-2-methyl-5-(diphosphooxymethyl)pyrimidine is bound by residues 303 to 307 and N335; that span reads QFREK. Mg(2+)-binding residues include D336 and D355. 4-amino-2-methyl-5-(diphosphooxymethyl)pyrimidine is bound at residue T374. 400–402 provides a ligand contact to 2-[(2R,5Z)-2-carboxy-4-methylthiazol-5(2H)-ylidene]ethyl phosphate; it reads TPS. Residue K403 participates in 4-amino-2-methyl-5-(diphosphooxymethyl)pyrimidine binding. 2-[(2R,5Z)-2-carboxy-4-methylthiazol-5(2H)-ylidene]ethyl phosphate is bound by residues G431 and 451 to 452; that span reads IS.

It in the N-terminal section; belongs to the Thz kinase family. In the C-terminal section; belongs to the thiamine-phosphate synthase family. Mg(2+) serves as cofactor.

It carries out the reaction 5-(2-hydroxyethyl)-4-methylthiazole + ATP = 4-methyl-5-(2-phosphooxyethyl)-thiazole + ADP + H(+). The enzyme catalyses 2-[(2R,5Z)-2-carboxy-4-methylthiazol-5(2H)-ylidene]ethyl phosphate + 4-amino-2-methyl-5-(diphosphooxymethyl)pyrimidine + 2 H(+) = thiamine phosphate + CO2 + diphosphate. It catalyses the reaction 2-(2-carboxy-4-methylthiazol-5-yl)ethyl phosphate + 4-amino-2-methyl-5-(diphosphooxymethyl)pyrimidine + 2 H(+) = thiamine phosphate + CO2 + diphosphate. The catalysed reaction is 4-methyl-5-(2-phosphooxyethyl)-thiazole + 4-amino-2-methyl-5-(diphosphooxymethyl)pyrimidine + H(+) = thiamine phosphate + diphosphate. It functions in the pathway cofactor biosynthesis; thiamine diphosphate biosynthesis; 4-methyl-5-(2-phosphoethyl)-thiazole from 5-(2-hydroxyethyl)-4-methylthiazole: step 1/1. The protein operates within cofactor biosynthesis; thiamine diphosphate biosynthesis; thiamine phosphate from 4-amino-2-methyl-5-diphosphomethylpyrimidine and 4-methyl-5-(2-phosphoethyl)-thiazole: step 1/1. In terms of biological role, condenses 4-methyl-5-(beta-hydroxyethyl)thiazole monophosphate (THZ-P) and 2-methyl-4-amino-5-hydroxymethyl pyrimidine pyrophosphate (HMP-PP) to form thiamine monophosphate (TMP). The protein is Thiamine biosynthesis bifunctional protein ThiM/ThiE (thiM/thiE) of Symbiobacterium thermophilum (strain DSM 24528 / JCM 14929 / IAM 14863 / T).